The primary structure comprises 84 residues: UPF0457 protein BT9727_3043 (84 aa).

The protein belongs to the UPF0457 family.

This Bacillus thuringiensis subsp. konkukian (strain 97-27) protein is UPF0457 protein BT9727_3043.